Here is a 258-residue protein sequence, read N- to C-terminus: Acyl-[acyl-carrier-protein]--UDP-N-acetylglucosamine O-acyltransferase (258 aa).

This sequence belongs to the transferase hexapeptide repeat family. LpxA subfamily. In terms of assembly, homotrimer.

Its subcellular location is the cytoplasm. It carries out the reaction a (3R)-hydroxyacyl-[ACP] + UDP-N-acetyl-alpha-D-glucosamine = a UDP-3-O-[(3R)-3-hydroxyacyl]-N-acetyl-alpha-D-glucosamine + holo-[ACP]. Its pathway is glycolipid biosynthesis; lipid IV(A) biosynthesis; lipid IV(A) from (3R)-3-hydroxytetradecanoyl-[acyl-carrier-protein] and UDP-N-acetyl-alpha-D-glucosamine: step 1/6. In terms of biological role, involved in the biosynthesis of lipid A, a phosphorylated glycolipid that anchors the lipopolysaccharide to the outer membrane of the cell. This is Acyl-[acyl-carrier-protein]--UDP-N-acetylglucosamine O-acyltransferase from Neisseria meningitidis serogroup B (strain ATCC BAA-335 / MC58).